We begin with the raw amino-acid sequence, 323 residues long: Large ribosomal subunit protein uL10x (323 aa).

A disordered region spans residues D287–E323. Residue S308 is modified to Phosphoserine. Residues S308 to E323 are compositionally biased toward acidic residues. Y313 is subject to Phosphotyrosine.

It belongs to the universal ribosomal protein uL10 family. In terms of assembly, P0 forms a pentameric complex by interaction with dimers of P1 and P2.

Functionally, ribosomal protein P0 is the functional equivalent of E.coli protein L10. The chain is Large ribosomal subunit protein uL10x (RPP0C) from Arabidopsis thaliana (Mouse-ear cress).